Consider the following 101-residue polypeptide: Large ribosomal subunit protein uL24 (101 aa).

This sequence belongs to the universal ribosomal protein uL24 family. In terms of assembly, part of the 50S ribosomal subunit.

Its function is as follows. One of two assembly initiator proteins, it binds directly to the 5'-end of the 23S rRNA, where it nucleates assembly of the 50S subunit. In terms of biological role, one of the proteins that surrounds the polypeptide exit tunnel on the outside of the subunit. This is Large ribosomal subunit protein uL24 from Streptococcus uberis (strain ATCC BAA-854 / 0140J).